Here is a 202-residue protein sequence, read N- to C-terminus: Na(+)-translocating NADH-quinone reductase subunit E (202 aa).

6 helical membrane passes run 5-25 (VSLF…FLGM), 35-55 (VSTA…TVPL), 81-101 (FLGL…LEMF), 114-134 (GVFL…LFMV), 144-164 (LTYG…LAGI), and 180-200 (LGIT…FGGM).

Belongs to the NqrDE/RnfAE family. Composed of six subunits; NqrA, NqrB, NqrC, NqrD, NqrE and NqrF.

The protein resides in the cell inner membrane. It carries out the reaction a ubiquinone + n Na(+)(in) + NADH + H(+) = a ubiquinol + n Na(+)(out) + NAD(+). Functionally, NQR complex catalyzes the reduction of ubiquinone-1 to ubiquinol by two successive reactions, coupled with the transport of Na(+) ions from the cytoplasm to the periplasm. NqrA to NqrE are probably involved in the second step, the conversion of ubisemiquinone to ubiquinol. This Psychrobacter sp. (strain PRwf-1) protein is Na(+)-translocating NADH-quinone reductase subunit E.